A 298-amino-acid chain; its full sequence is MDQKQIEEIVRSVMASMGQDVPQPAAPSTQEGAKPQCAVPTVAESCALDLGSAEAKAWIGVENPHRADVLTELRRSTAARVCTGRAGPRPRTQALLRFLADHSRSKDTVLKEVPEEWVKAQGLLEVRSEISDKNLYLTRPDMGRRLSPEAIDALKSQCVMNPDVQVVVSDGLSTDAITANYEEILPPLLAGLKQAGLNVGTPFFVRYGRVKIEDQIGEILGAKVVILLVGERPGLGQSESLSCYAVYSPRVATTVEADRTCISNIHQGGTPPVEAAAVIVDLAKRMLEQKASGINMTR.

Adenosylcob(III)alamin-binding residues include Val-210, Glu-231, and Cys-261.

The protein belongs to the EutC family. In terms of assembly, the basic unit is a heterodimer which dimerizes to form tetramers. The heterotetramers trimerize; 6 large subunits form a core ring with 6 small subunits projecting outwards. It depends on adenosylcob(III)alamin as a cofactor.

The protein localises to the bacterial microcompartment. The catalysed reaction is ethanolamine = acetaldehyde + NH4(+). Its pathway is amine and polyamine degradation; ethanolamine degradation. Functionally, catalyzes the deamination of various vicinal amino-alcohols to oxo compounds. Allows this organism to utilize ethanolamine as the sole source of nitrogen and carbon in the presence of external vitamin B12. In Salmonella schwarzengrund (strain CVM19633), this protein is Ethanolamine ammonia-lyase small subunit.